We begin with the raw amino-acid sequence, 122 residues long: Large ribosomal subunit protein uL14 (122 aa).

Belongs to the universal ribosomal protein uL14 family. In terms of assembly, part of the 50S ribosomal subunit. Forms a cluster with proteins L3 and L19. In the 70S ribosome, L14 and L19 interact and together make contacts with the 16S rRNA in bridges B5 and B8.

In terms of biological role, binds to 23S rRNA. Forms part of two intersubunit bridges in the 70S ribosome. The chain is Large ribosomal subunit protein uL14 from Chelativorans sp. (strain BNC1).